The chain runs to 296 residues: Nitrogenase iron protein (296 aa).

Residue 11–18 (GKGGIGKS) participates in ATP binding. Cysteine 99 is a [4Fe-4S] cluster binding site. Arginine 102 bears the ADP-ribosylarginine; by dinitrogenase reductase ADP-ribosyltransferase mark. Cysteine 133 lines the [4Fe-4S] cluster pocket.

Belongs to the NifH/BchL/ChlL family. As to quaternary structure, homodimer. It depends on [4Fe-4S] cluster as a cofactor. In terms of processing, the reversible ADP-ribosylation of Arg-102 inactivates the nitrogenase reductase and regulates nitrogenase activity.

It carries out the reaction N2 + 8 reduced [2Fe-2S]-[ferredoxin] + 16 ATP + 16 H2O = H2 + 8 oxidized [2Fe-2S]-[ferredoxin] + 2 NH4(+) + 16 ADP + 16 phosphate + 6 H(+). Functionally, the key enzymatic reactions in nitrogen fixation are catalyzed by the nitrogenase complex, which has 2 components: the iron protein and the molybdenum-iron protein. The protein is Nitrogenase iron protein (nifH1) of Sinorhizobium fredii (strain NBRC 101917 / NGR234).